The primary structure comprises 618 residues: Chaperone protein dnaK (618 aa).

The segment at 595-618 (SKTETTTPNKNEEDVIDASFSEEK) is disordered.

This sequence belongs to the heat shock protein 70 family.

The protein localises to the plastid. Its subcellular location is the cyanelle. Functionally, acts as a chaperone. The protein is Chaperone protein dnaK (dnaK-A) of Cyanophora paradoxa.